A 529-amino-acid chain; its full sequence is Arginine--tRNA ligase (529 aa).

The 'HIGH' region motif lies at 113 to 123; that stretch reads ANPTGPLHIGH.

It belongs to the class-I aminoacyl-tRNA synthetase family. As to quaternary structure, monomer.

The protein localises to the cytoplasm. It carries out the reaction tRNA(Arg) + L-arginine + ATP = L-arginyl-tRNA(Arg) + AMP + diphosphate. The sequence is that of Arginine--tRNA ligase from Aliarcobacter butzleri (strain RM4018) (Arcobacter butzleri).